Here is a 749-residue protein sequence, read N- to C-terminus: Small G protein signaling modulator 3 (749 aa).

Residues 113-304 (GIPHGMRPQL…RIWDLFFYEG (192 aa)) form the Rab-GAP TBC domain. The residue at position 405 (S405) is a Phosphoserine. Residues 414 to 438 (EDDLEALKAKNIKQTELVADLREAI) adopt a coiled-coil conformation. The SH3 domain occupies 479-538 (SHRRRAKALLDFERHDDDELGFRKNDIITIISQKDEHCWVGELNGLRGWFPAKFVEVLDE). The 164-residue stretch at 554–717 (GVTDLVRGTL…FAFSLSQDWE (164 aa)) folds into the RUN domain.

Belongs to the small G protein signaling modulator family. As to quaternary structure, interacts with GJA1. Interaction with GJA1 induces its degradation. Interacts (via RUN domain) with NF2 (via C-terminus). Interacts with RAB3A, RAB4A, RAB5A, RAB8A, RAB11A, RAP1A, RAP1B, RAP2A, RAP2B and PDCD6I. No interaction with RAB27A. No interaction with GJB1 or GJD2. In terms of tissue distribution, expressed in brain, liver, kidney and testis. Moderately expressed in heart, very weakly in lung and muscle. Not expressed in spleen.

The protein localises to the cytoplasm. May play a cooperative role in NF2-mediated growth suppression of cells. May act as a modulator of small G protein RAB- and RAP-mediated neuronal signal transduction and vesicular transportation pathways. In Rattus norvegicus (Rat), this protein is Small G protein signaling modulator 3.